A 110-amino-acid polypeptide reads, in one-letter code: MESNRGQGSIQQLLAAEVEAQHIVNAARTAKMARLKQAKEEAEKEIAEYKAQTEQDFQRKLEETSGDSGANVKRLEQETDTKIEQLKNEASRISKDVVEMLLKHVTTVKN.

Met-1 carries the N-acetylmethionine modification. Positions 60–80 are disordered; it reads KLEETSGDSGANVKRLEQETD.

This sequence belongs to the V-ATPase G subunit family. In terms of assembly, V-ATPase is a heteromultimeric enzyme composed of a peripheral catalytic V1 complex (components A to H) attached to an integral membrane V0 proton pore complex (components: a, c, c'', d and e).

It is found in the cell membrane. Its subcellular location is the vacuole membrane. Catalytic subunit of the peripheral V1 complex of vacuolar ATPase (V-ATPase). V-ATPase is responsible for acidifying a variety of intracellular compartments in eukaryotic cells. The protein is V-type proton ATPase subunit G1 (VHA-G1) of Arabidopsis thaliana (Mouse-ear cress).